Reading from the N-terminus, the 372-residue chain is E3 ubiquitin-protein ligase RNF34 (372 aa).

Residues 56–107 (EGPNIVCKACGLSFSVFRKKHVCCDCKKDFCSVCSVLQENLRRCSTCHLLQE) form an FYVE-type zinc finger. An SAP 1 domain is found at 115 to 134 (LMRLKVKDLRQYLILRNIPI). Position 169 is a phosphoserine (serine 169). A disordered region spans residues 194–253 (QGELMDGDQTSRSGVPAQVQSEITSANTEDDDDDDDEDDDDEEENAEDRNPGLSKERVRA). The segment covering 201 to 220 (DQTSRSGVPAQVQSEITSAN) has biased composition (polar residues). Acidic residues predominate over residues 221–239 (TEDDDDDDDEDDDDEEENA). A compositionally biased stretch (basic and acidic residues) spans 240 to 252 (EDRNPGLSKERVR). Phosphoserine occurs at positions 254 and 256. One can recognise an SAP 2 domain in the interval 264–278 (VEGMSVRQLKEILAR). The segment at 325–360 (CRICMDAVIDCVLLECGHMVTCTKCGKRMSECPICR) adopts an RING-type zinc-finger fold.

Interacts with CASP8 and CASP10. Interacts (via RING-type zinc finger) with PPARGC1A. Interacts with NOD1. Interacts with p53/TP53; involved in p53/TP53 ubiquitination. Interacts (via RING-type zinc finger) with MDM2; the interaction stabilizes MDM2. In terms of processing, autoubiquitinated (in vitro). Proteolytically cleaved by caspases upon induction of apoptosis by TNF. Ubiquitous. Detected in heart, brain, liver, skeletal muscle, kidney, pancreas, spleen, thymus, prostate, testis, ovary, colon and leukocytes.

Its subcellular location is the cell membrane. It localises to the endomembrane system. The protein resides in the nucleus. It is found in the nucleus speckle. The protein localises to the cytoplasm. Its subcellular location is the cytosol. The catalysed reaction is S-ubiquitinyl-[E2 ubiquitin-conjugating enzyme]-L-cysteine + [acceptor protein]-L-lysine = [E2 ubiquitin-conjugating enzyme]-L-cysteine + N(6)-ubiquitinyl-[acceptor protein]-L-lysine.. It functions in the pathway protein modification; protein ubiquitination. Functionally, E3 ubiquitin-protein ligase that regulates several biological processes through the ubiquitin-mediated proteasomal degradation of various target proteins. Ubiquitinates the caspases CASP8 and CASP10, promoting their proteasomal degradation, to negatively regulate cell death downstream of death domain receptors in the extrinsic pathway of apoptosis. May mediate 'Lys-48'-linked polyubiquitination of RIPK1 and its subsequent proteasomal degradation thereby indirectly regulating the tumor necrosis factor-mediated signaling pathway. Negatively regulates p53/TP53 through its direct ubiquitination and targeting to proteasomal degradation. Indirectly, may also negatively regulate p53/TP53 through ubiquitination and degradation of SFN. Mediates PPARGC1A proteasomal degradation probably through ubiquitination thereby indirectly regulating the metabolism of brown fat cells. Possibly involved in innate immunity, through 'Lys-48'-linked polyubiquitination of NOD1 and its subsequent proteasomal degradation. This Homo sapiens (Human) protein is E3 ubiquitin-protein ligase RNF34.